The chain runs to 210 residues: Thymidylate kinase (210 aa).

An ATP-binding site is contributed by 11 to 18 (GVDGAGKT).

Belongs to the thymidylate kinase family.

It carries out the reaction dTMP + ATP = dTDP + ADP. Its function is as follows. Phosphorylation of dTMP to form dTDP in both de novo and salvage pathways of dTTP synthesis. The chain is Thymidylate kinase (tmk) from Mycoplasma genitalium (strain ATCC 33530 / DSM 19775 / NCTC 10195 / G37) (Mycoplasmoides genitalium).